Consider the following 1576-residue polypeptide: Protein Shroom (1576 aa).

Disordered regions lie at residues 1-31, 46-100, 112-142, 187-244, 267-434, 589-609, and 621-660; these read MKMR…ENNN, SNGA…TQAG, YDQT…DSTS, RQSH…SSTE, ISES…ISVT, VERQ…HSQS, and PNNL…SLLP. Positions 10 to 21 are enriched in polar residues; it reads GNGSEMGESTKS. Low complexity-rich tracts occupy residues 46 to 69, 76 to 91, and 128 to 142; these read SNGA…AGSV, HNSS…GSSL, and SEGY…DSTS. Residues 189–211 are compositionally biased toward basic residues; it reads SHSHSHSHAHSHSNSHGHSHGHA. Low complexity-rich tracts occupy residues 212–244 and 267–283; these read HSAS…SSTE and ISES…SSRV. Residues 305–317 show a composition bias toward polar residues; it reads DSSPTASNSSQMM. A compositionally biased stretch (low complexity) spans 376 to 388; that stretch reads QSTLSTQSSLLEL. Positions 399–415 are enriched in polar residues; sequence MGQSHSMGDLQQKNPHQ. Ser-404 bears the Phosphoserine mark. The segment at 445 to 920 is F-actin binding region required for planar polarity and cortical localization; the sequence is APQPPAGKPS…LESNQQKRSN (476 aa). A compositionally biased stretch (polar residues) spans 633–643; the sequence is TGSNSASTRDC. Residues Ser-667 and Ser-668 each carry the phosphoserine modification. Disordered regions lie at residues 699–728, 743–823, 849–876, 910–939, 1036–1055, 1091–1116, and 1210–1244; these read ISFN…SSAT, AALA…NCFA, VPKK…HHAT, NLES…NTDP, GYGK…SQSY, PTAT…SHSD, and SFAN…DVHD. The span at 748-759 shows a compositional bias: basic residues; it reads QQHHPQQHRHAQ. Pro residues predominate over residues 798 to 816; that stretch reads PLPPPPPPEVLQPRPPPSP. 2 stretches are compositionally biased toward polar residues: residues 910-923 and 1042-1055; these read NLES…NSKA and KPVT…SQSY. Pro residues-rich tracts occupy residues 1094–1108 and 1217–1229; these read TPTP…PPRL and MTPP…PPPL. Positions 1230–1239 are enriched in acidic residues; the sequence is EPEEEEEQEE. The stretch at 1232–1296 forms a coiled coil; it reads EEEEEQEEND…LEAAREEHQT (65 aa). Positions 1305 to 1572 constitute an ASD2 domain; sequence RQPIELDYEQ…QLSSLSDALV (268 aa).

Belongs to the shroom family. Monomer or homodimer. Interacts with Rok. As to quaternary structure, binds (via N-terminus) to F-actin.

It is found in the cell junction. The protein localises to the adherens junction. It localises to the cytoplasm. Its subcellular location is the cytoskeleton. The protein resides in the apical cell membrane. Its function is as follows. Binds to Rho-kinase Rok and targets it to the apical cell cortex where it mediates apical constriction. During embryogenic axis elongation, required for the localization to adherens junctions and the establishment of planar polarization of both Rho-kinase Rok and myosin regulatory light chain sqh. May be involved in the assembly of microtubule arrays during cell elongation. In Drosophila melanogaster (Fruit fly), this protein is Protein Shroom.